The chain runs to 423 residues: Glutamyl-tRNA reductase (423 aa).

Residues 49 to 52 (TCNR), Ser-111, 116 to 118 (EPQ), and Gln-122 each bind substrate. The active-site Nucleophile is Cys-50. 191–196 (GAGEMS) contributes to the NADP(+) binding site.

This sequence belongs to the glutamyl-tRNA reductase family. Homodimer.

The catalysed reaction is (S)-4-amino-5-oxopentanoate + tRNA(Glu) + NADP(+) = L-glutamyl-tRNA(Glu) + NADPH + H(+). Its pathway is porphyrin-containing compound metabolism; protoporphyrin-IX biosynthesis; 5-aminolevulinate from L-glutamyl-tRNA(Glu): step 1/2. Functionally, catalyzes the NADPH-dependent reduction of glutamyl-tRNA(Glu) to glutamate 1-semialdehyde (GSA). This is Glutamyl-tRNA reductase from Syntrophus aciditrophicus (strain SB).